A 285-amino-acid polypeptide reads, in one-letter code: G patch domain-containing protein 11 (285 aa).

Positions methionine 51 to isoleucine 87 form a coiled coil. Residues arginine 59–arginine 84 are disordered. The region spanning cysteine 95–serine 141 is the G-patch domain. At serine 141 the chain carries Phosphoserine. N6-acetyllysine is present on lysine 149. Acidic residues predominate over residues glutamate 218–lysine 235. Positions glutamate 218–glutamate 237 are disordered.

Belongs to the GPATCH11 family.

The protein resides in the chromosome. It localises to the centromere. It is found in the kinetochore. The chain is G patch domain-containing protein 11 (GPATCH11) from Homo sapiens (Human).